A 251-amino-acid chain; its full sequence is CDP-diacylglycerol pyrophosphatase (251 aa).

Residues 4–24 (AGLLFLVMIVIAVVAAGIGYW) traverse the membrane as a helical segment.

Belongs to the Cdh family.

It localises to the cell inner membrane. It catalyses the reaction a CDP-1,2-diacyl-sn-glycerol + H2O = a 1,2-diacyl-sn-glycero-3-phosphate + CMP + 2 H(+). The protein operates within phospholipid metabolism; CDP-diacylglycerol degradation; phosphatidate from CDP-diacylglycerol: step 1/1. In Escherichia coli (strain SE11), this protein is CDP-diacylglycerol pyrophosphatase.